A 178-amino-acid polypeptide reads, in one-letter code: Endothelin-2 (178 aa).

Residues 1–24 (MVSVPTTWCSVALALLVALHEGKG) form the signal peptide. The propeptide occupies 25–46 (QAAATLEQPASSSHAQGTHLRL). 2 cysteine pairs are disulfide-bonded: C49–C63 and C51–C59. The propeptide occupies 70–178 (VNTPEQTAPY…RSTHSRWRKR (109 aa)). An endothelin-like region spans residues 96–111 (CQCSSARDPACATFCL). Residues 159 to 178 (KRQQEAMREPRSTHSRWRKR) form a disordered region. Residues 160 to 170 (RQQEAMREPRS) are compositionally biased toward basic and acidic residues.

The protein belongs to the endothelin/sarafotoxin family. Expressed in lung, but not in placental stem villi vessels or cultured placental villi smooth muscle cells.

The protein localises to the secreted. Functionally, endothelins are endothelium-derived vasoconstrictor peptides. The protein is Endothelin-2 (EDN2) of Homo sapiens (Human).